The sequence spans 146 residues: Large ribosomal subunit protein uL15 (146 aa).

Residues 1–18 (MKLHELKPSEGSRKERNR) show a composition bias toward basic and acidic residues. The tract at residues 1–50 (MKLHELKPSEGSRKERNRVGRGTGSGNGKTSGRGHKGQKARSGGGVRLGF) is disordered. Residues 21–31 (RGTGSGNGKTS) are compositionally biased toward gly residues.

This sequence belongs to the universal ribosomal protein uL15 family. Part of the 50S ribosomal subunit.

Functionally, binds to the 23S rRNA. The protein is Large ribosomal subunit protein uL15 of Listeria monocytogenes serotype 4b (strain CLIP80459).